Consider the following 685-residue polypeptide: MIDQYKHQQLRIGPVSPQQIRAWANKILPNGEIIGEVTKPYTFHYKTNKPEKDGLFCERISGPIKSGICACGNYRVIGAEKEDPKFCEQCGVEFVDSRIRRYQMGYIKLACPATHVWYLKRLPSYIANLLDKPLKELEGLVYCDVFSFARPISKKPTFLRLRGSFEYEIQSWKYSIPLFFTNQSFETFRNREISTGAGAIREQLADSDLQIILNNSLVEWKELGDEEVIGTGNEWEDRKIRRRKDFLVKRMELAKHFIRTNVEPKRMVLCLLPVLPPELRPIIQIDGGKLMSSDINELYRRVIYRNNTLTDLLATSRSMPGELVMCQEKLVQEAVDTLLDNGIRGQPMKDGHNKVYKSFSDVIEGKEGRFRETLLGKRVDYSGRSVIVVGPSLSLHQCGLPREIAIELFQTFLIHGLIKQHVASNIGIAKSKIREKEPIVWEILQEVMRGHPILLNRAPTLHRLGIQAFQPILVEERAICLHPLVCRGFNADFDGDQMAVHVPLSLEAQAEARLLMFSHMNLLSPAIGDPISVPTQDMLIGLYVLTIGNRRGICANRYNTYNCRNSQNKILNNNKYNYIKMKATYCCSSYDALGAYRQKRIDLDSPLWLRWRLDQRVIGSREVPIEIQYESLGTYHEIYRHYLIVRSVKKKIRWIYIRTTIGHISFYREIEEAVQGFCWAYSYVI.

Cysteine 69, cysteine 71, cysteine 87, and cysteine 90 together coordinate Zn(2+). Positions 492, 494, and 496 each coordinate Mg(2+).

It belongs to the RNA polymerase beta' chain family. RpoC1 subfamily. As to quaternary structure, in plastids the minimal PEP RNA polymerase catalytic core is composed of four subunits: alpha, beta, beta', and beta''. When a (nuclear-encoded) sigma factor is associated with the core the holoenzyme is formed, which can initiate transcription. Mg(2+) serves as cofactor. It depends on Zn(2+) as a cofactor.

The protein localises to the plastid. It localises to the chloroplast. The catalysed reaction is RNA(n) + a ribonucleoside 5'-triphosphate = RNA(n+1) + diphosphate. Its function is as follows. DNA-dependent RNA polymerase catalyzes the transcription of DNA into RNA using the four ribonucleoside triphosphates as substrates. The protein is DNA-directed RNA polymerase subunit beta' of Dioscorea elephantipes (Elephant's foot yam).